The following is a 452-amino-acid chain: GTPase Der (452 aa).

EngA-type G domains lie at 4 to 169 and 177 to 352; these read PIVA…PTTE and IKVA…ASHR. Residues 10–17, 57–61, 120–123, 183–190, 230–234, and 295–298 contribute to the GTP site; these read GRPNVGKS, DTGGL, NKCE, DTAGI, and NKWD. A KH-like domain is found at 353–438; that stretch reads RRVSTAVINE…PIRLIWRGKS (86 aa).

Belongs to the TRAFAC class TrmE-Era-EngA-EngB-Septin-like GTPase superfamily. EngA (Der) GTPase family. Associates with the 50S ribosomal subunit.

Its function is as follows. GTPase that plays an essential role in the late steps of ribosome biogenesis. The sequence is that of GTPase Der from Gloeothece citriformis (strain PCC 7424) (Cyanothece sp. (strain PCC 7424)).